A 761-amino-acid polypeptide reads, in one-letter code: Mitochondrial inner membrane m-AAA protease component YTA10 (761 aa).

The Mitochondrial matrix portion of the chain corresponds to 1-115 (MMMWQRYARG…SLSEYFRSKE (115 aa)). The tract at residues 67–101 (SWTRLNENRPNKEGEGKNNGNKDNNSNKEDGKDKR) is disordered. Basic and acidic residues-rich tracts occupy residues 72–82 (NENRPNKEGEG) and 91–101 (NSNKEDGKDKR). A helical transmembrane segment spans residues 116–136 (FANTMFLTIGFTIIFTLLTPS). Over 137–223 (SNNSGDDSNR…IPIKYIERSS (87 aa)) the chain is Mitochondrial intermembrane. A helical transmembrane segment spans residues 224 to 244 (PFTFLFPFLPTIILLGGLYFI). Residues 245–761 (TRKINSSPPN…EPPEAPAATN (517 aa)) are Mitochondrial matrix-facing. ATP contacts are provided by Val290, Ala291, Thr332, Gly333, Lys334, Thr335, Leu336, and His472. His558 is a binding site for Zn(2+). Glu559 is a catalytic residue. Zn(2+) is bound by residues His562 and Asp634.

In the N-terminal section; belongs to the AAA ATPase family. The protein in the C-terminal section; belongs to the peptidase M41 family. In terms of assembly, component of the 850 kDa m-AAA protease complex, a heterohexamer composed of YTA12/RCA1 and YTA10/AFG3. Associates with the prohibitin complex, composed of PHB1 and PHB2, inhibiting the activity of the m-AAA protease complex. The cofactor is Zn(2+).

It localises to the mitochondrion inner membrane. The catalysed reaction is ATP + H2O = ADP + phosphate + H(+). With respect to regulation, ATP hydrolysis is coordinated within m-AAA protease ring complexes: ATP-binding to YTA10/AFG3 inhibits ATP hydrolysis by the neighboring subunit YTA12/RCA1, leading to coordinated ATP hydrolysis within the AAA ATPase ring. Its function is as follows. Catalytic component of the m-AAA protease, a protease that plays a key role in proteostasis of inner mitochondrial membrane proteins. YTA10/AFG3 possesses both ATPase and protease activities: the ATPase activity is required to unfold substrates, threading them into the internal proteolytic cavity for hydrolysis into small peptide fragments. The complex is necessary for the assembly of mitochondrial respiratory chain and ATPase complexes. The m-AAA protease carries out protein quality control in the inner membrane of the mitochondria by mediating degradation of mistranslated or misfolded polypeptides. It also mediates protein maturation of the mitochondrial ribosomal subunit MRPL32/bL32m by catalyzing the cleavage of the presequence of MRPL32/bL32m prior to assembly into the mitochondrial ribosome. Promotes maturation of cytochrome c peroxidase (CCP1) by acting as a membrane protein dislocase via its ATPase activity: pulls the CCP1 transmembrane to the matrix prior to processing by the rhomboid protease PCP1. The membrane protein dislocase activity is also required to dislocate moderately hydrophobic transmembrane segments from the membrane. This chain is Mitochondrial inner membrane m-AAA protease component YTA10, found in Saccharomyces cerevisiae (strain ATCC 204508 / S288c) (Baker's yeast).